The following is a 128-amino-acid chain: Phosphoribosyl-AMP cyclohydrolase (128 aa).

Asp-77 serves as a coordination point for Mg(2+). Cys-78 contributes to the Zn(2+) binding site. Positions 79 and 81 each coordinate Mg(2+). Zn(2+)-binding residues include Cys-94 and Cys-101.

This sequence belongs to the PRA-CH family. As to quaternary structure, homodimer. The cofactor is Mg(2+). Requires Zn(2+) as cofactor.

It is found in the cytoplasm. It catalyses the reaction 1-(5-phospho-beta-D-ribosyl)-5'-AMP + H2O = 1-(5-phospho-beta-D-ribosyl)-5-[(5-phospho-beta-D-ribosylamino)methylideneamino]imidazole-4-carboxamide. It functions in the pathway amino-acid biosynthesis; L-histidine biosynthesis; L-histidine from 5-phospho-alpha-D-ribose 1-diphosphate: step 3/9. Functionally, catalyzes the hydrolysis of the adenine ring of phosphoribosyl-AMP. In Granulibacter bethesdensis (strain ATCC BAA-1260 / CGDNIH1), this protein is Phosphoribosyl-AMP cyclohydrolase.